We begin with the raw amino-acid sequence, 153 residues long: 6,7-dimethyl-8-ribityllumazine synthase (153 aa).

Residues Phe-21, 55 to 57 (AFE), and 79 to 81 (TVI) contribute to the 5-amino-6-(D-ribitylamino)uracil site. 84 to 85 (AT) serves as a coordination point for (2S)-2-hydroxy-3-oxobutyl phosphate. Residue His-87 is the Proton donor of the active site. Phe-112 lines the 5-amino-6-(D-ribitylamino)uracil pocket. Arg-126 lines the (2S)-2-hydroxy-3-oxobutyl phosphate pocket.

It belongs to the DMRL synthase family. As to quaternary structure, forms an icosahedral capsid composed of 60 subunits, arranged as a dodecamer of pentamers.

It catalyses the reaction (2S)-2-hydroxy-3-oxobutyl phosphate + 5-amino-6-(D-ribitylamino)uracil = 6,7-dimethyl-8-(1-D-ribityl)lumazine + phosphate + 2 H2O + H(+). The protein operates within cofactor biosynthesis; riboflavin biosynthesis; riboflavin from 2-hydroxy-3-oxobutyl phosphate and 5-amino-6-(D-ribitylamino)uracil: step 1/2. In terms of biological role, catalyzes the formation of 6,7-dimethyl-8-ribityllumazine by condensation of 5-amino-6-(D-ribitylamino)uracil with 3,4-dihydroxy-2-butanone 4-phosphate. This is the penultimate step in the biosynthesis of riboflavin. The sequence is that of 6,7-dimethyl-8-ribityllumazine synthase from Bacillus cereus (strain AH187).